An 86-amino-acid chain; its full sequence is Cell division topological specificity factor (86 aa).

It belongs to the MinE family.

Its function is as follows. Prevents the cell division inhibition by proteins MinC and MinD at internal division sites while permitting inhibition at polar sites. This ensures cell division at the proper site by restricting the formation of a division septum at the midpoint of the long axis of the cell. The protein is Cell division topological specificity factor of Shewanella loihica (strain ATCC BAA-1088 / PV-4).